Consider the following 622-residue polypeptide: ABC transporter permease protein YxdM (622 aa).

Helical transmembrane passes span Ala20–Phe40, Gly56–Val76, Ala118–Leu138, Ile154–Val174, Pro195–Leu215, Val219–Phe239, Leu279–Met299, Thr498–Val518, Ile558–Ala578, and Val590–Leu610.

It belongs to the ABC-4 integral membrane protein family. The complex is composed of two ATP-binding proteins (YxdL) and two transmembrane proteins (YxdM).

The protein resides in the cell membrane. Functionally, part of the ABC transporter complex YxdLM which could be involved in peptide resistance. The sequence is that of ABC transporter permease protein YxdM (yxdM) from Bacillus subtilis (strain 168).